We begin with the raw amino-acid sequence, 329 residues long: Putative glycosyltransferase CsbB (329 aa).

The next 2 membrane-spanning stretches (helical) occupy residues 231-251 and 264-284; these read CFYT…ATFV and FTII…LGII.

Belongs to the glycosyltransferase 2 family. GtrB subfamily.

The protein resides in the cell membrane. The chain is Putative glycosyltransferase CsbB (csbB) from Bacillus subtilis (strain 168).